The following is a 554-amino-acid chain: (Z)-gamma-bisabolene synthase 2 (554 aa).

The Mg(2+) site is built by aspartate 306, aspartate 310, aspartate 450, and aspartate 458. The DDXXD motif motif lies at 306 to 310 (DDACD).

It belongs to the terpene synthase family. Tpsa subfamily. It depends on Mg(2+) as a cofactor. Mn(2+) is required as a cofactor. Predominantly expressed in roots. Expressed in the cortex and the sub-epidermal layers of roots. Also detected in leaf hydathodes and flower stigmata.

The protein resides in the cytoplasm. The catalysed reaction is (2E,6E)-farnesyl diphosphate = (Z)-gamma-bisabolene + diphosphate. It functions in the pathway secondary metabolite biosynthesis; terpenoid biosynthesis. Its function is as follows. Involved in sesquiterpene (C15) biosynthesis. The major product is (Z)-gamma-bisabolene with minor amounts of (E)-nerolidol and alpha-bisabolol. In Arabidopsis thaliana (Mouse-ear cress), this protein is (Z)-gamma-bisabolene synthase 2 (TPS13).